The primary structure comprises 147 residues: Ponticulin-like protein C5 (147 aa).

The signal sequence occupies residues 1 to 20; that stretch reads MKLNNSLLLLIVAIIASSNA. Asn-118 carries the GPI-like-anchor amidated asparagine lipid modification. A glycan (N-linked (GlcNAc...) asparagine) is linked at Asn-118. Residues 119 to 147 constitute a propeptide, removed in mature form; sequence SSESDSSDSTRIGASFALFALALLSMLAL.

The protein belongs to the ponticulin family. In terms of processing, the GPI-like-anchor contains a phosphoceramide group, rather than a phosphatidyl group.

Its subcellular location is the cell membrane. In Dictyostelium discoideum (Social amoeba), this protein is Ponticulin-like protein C5 (ponC5).